A 109-amino-acid polypeptide reads, in one-letter code: Small ribosomal subunit protein bS20 (109 aa).

Belongs to the bacterial ribosomal protein bS20 family.

Its function is as follows. Binds directly to 16S ribosomal RNA. In Synechococcus sp. (strain JA-2-3B'a(2-13)) (Cyanobacteria bacterium Yellowstone B-Prime), this protein is Small ribosomal subunit protein bS20.